Here is a 67-residue protein sequence, read N- to C-terminus: Small ribosomal subunit protein bS21 (67 aa).

It belongs to the bacterial ribosomal protein bS21 family.

The protein is Small ribosomal subunit protein bS21 of Granulibacter bethesdensis (strain ATCC BAA-1260 / CGDNIH1).